The chain runs to 1164 residues: Nuclear exosome regulator NRDE2 (1164 aa).

Disordered regions lie at residues 1 to 25 (MALF…ELDW) and 39 to 149 (LSQQ…GHRF). A2 is modified (N-acetylalanine). Residues 61–73 (LKSESSDESDTNK) are compositionally biased toward basic and acidic residues. Positions 61-383 (LKSESSDESD…IESNQSSVDL (323 aa)) form a coiled coil. Positions 74-103 (KLKQTSRKKKKEKKKKRKHQHHKKTKRKHG) are enriched in basic residues. Over residues 110–133 (SETDTDSEKDKPSRGVGGSKKESE) the composition is skewed to basic and acidic residues. Residues 163-266 (FRTDKKPDPA…KDLEDAAPVT (104 aa)) are MID/MTR4-interacting domain. The tract at residues 279–305 (TTHWLQGQGPPEQESKQPDAQPDSESA) is disordered. HAT repeat units lie at residues 305–337 (AALK…FQDE), 395–427 (WEPS…FCQS), 758–792 (SQGK…LEWL), 978–1010 (YPLA…IQNK), and 1067–1101 (GLMH…FLVS).

The protein belongs to the NRDE2 family. Interacts with MTREX; the interaction is direct and stabilizes NRDE2. Interacts with EXOSC10, EFTUD2 and EIF4A3.

It localises to the nucleus speckle. It is found in the nucleus. Its subcellular location is the nucleolus. The protein localises to the nucleoplasm. Protein of the nuclear speckles that regulates RNA degradation and export from the nucleus through its interaction with MTREX an essential factor directing various RNAs to exosomal degradation. Changes the conformation of MTREX, precluding its association with the nuclear exosome and interaction with proteins required for its function in RNA exosomal degradation. Negatively regulates, for instance, the degradation of mRNAs and lncRNAs by inhibiting their MTREX-mediated recruitment to nuclear exosome. By preventing the degradation of RNAs in the nucleus, it promotes their export to the cytoplasm. U5 snRNP-associated RNA splicing factor which is required for efficient splicing of CEP131 pre-mRNA and plays an important role in centrosome maturation, integrity and function during mitosis. Suppresses intron retention in a subset of pre-mRNAs containing short, GC-rich introns with relatively weak 5' and 3' splice sites. Plays a role in DNA damage response. This Homo sapiens (Human) protein is Nuclear exosome regulator NRDE2.